Reading from the N-terminus, the 756-residue chain is Catalase-peroxidase (756 aa).

The tryptophyl-tyrosyl-methioninium (Trp-Tyr) (with M-270) cross-link spans 91-244; that stretch reads WHSAGTYRTG…LAAVQMGLIY (154 aa). His-92 acts as the Proton acceptor in catalysis. The disordered stretch occupies residues 198–230; it reads AQKKMQQPGDGTLVAEPENHANEESRTASGERN. Over residues 214 to 223 the composition is skewed to basic and acidic residues; the sequence is PENHANEESR. Positions 244–270 form a cross-link, tryptophyl-tyrosyl-methioninium (Tyr-Met) (with W-91); that stretch reads YVNPEGPEGVPDPVASARDIRETFGRM. His-285 contacts heme b.

The protein belongs to the peroxidase family. Peroxidase/catalase subfamily. As to quaternary structure, homodimer or homotetramer. The cofactor is heme b. In terms of processing, formation of the three residue Trp-Tyr-Met cross-link is important for the catalase, but not the peroxidase activity of the enzyme.

It catalyses the reaction H2O2 + AH2 = A + 2 H2O. It carries out the reaction 2 H2O2 = O2 + 2 H2O. Functionally, bifunctional enzyme with both catalase and broad-spectrum peroxidase activity. The polypeptide is Catalase-peroxidase (Pseudomonas syringae pv. syringae (strain B728a)).